The chain runs to 1339 residues: Transcription factor tau subunit sfc3 (1339 aa).

Positions 470-515 (MESNAEVSPDGMTLLPRKRGRPRKSANISVTSSPIRPSKNENNLPS) are disordered. Positions 485-497 (PRKRGRPRKSANI) form a DNA-binding region, a.T hook. The segment covering 495–514 (ANISVTSSPIRPSKNENNLP) has biased composition (polar residues). A phosphoserine mark is found at Ser-595 and Ser-596. The interval 791 to 826 (RRKSMPAEIKRHKESSETKPVDKEEVKKNEKEKDDP) is disordered. A compositionally biased stretch (basic and acidic residues) spans 798–826 (EIKRHKESSETKPVDKEEVKKNEKEKDDP).

As to quaternary structure, component of the TFIIIC complex including sfc1, sfc3, sfc4, sfc6 and sfc7. The subunits are organized in two globular domains, tauA and tauB, connected by a proteolysis-sensitive and flexible linker. Interacts with sfc1, sfc4 and sfc6.

The protein localises to the nucleus envelope. In terms of biological role, TFIIIC mediates tRNA and 5S RNA gene activation by binding to intragenic promoter elements. Upstream of the transcription start site, TFIIIC assembles the initiation complex TFIIIB-TFIIIC-tDNA, which is sufficient for RNA polymerase III recruitment and function. Part of the tauB domain of TFIIIC that binds boxB DNA promoter sites of tRNA and similar genes. Cooperates with sfc6 in DNA binding. Localizes to chromatin insulator sequence without recruiting RNA polymerase III and plays a role in nuclear organization. This chain is Transcription factor tau subunit sfc3, found in Schizosaccharomyces pombe (strain 972 / ATCC 24843) (Fission yeast).